Reading from the N-terminus, the 173-residue chain is Putative phosphoesterase GK0864 (173 aa).

Histidine 34 functions as the Proton donor in the catalytic mechanism. Short sequence motifs (HXTX) lie at residues 34–37 (HITL) and 115–118 (HITI). Histidine 115 functions as the Proton acceptor in the catalytic mechanism.

Belongs to the 2H phosphoesterase superfamily. YjcG family.

The protein is Putative phosphoesterase GK0864 of Geobacillus kaustophilus (strain HTA426).